Here is a 331-residue protein sequence, read N- to C-terminus: Nacrein-like protein P1 (331 aa).

The Alpha-carbonic anhydrase domain maps to 1–331; that stretch reads QSPINIVSYD…LHALRNVEGY (331 aa). Zn(2+) contacts are provided by H69, H71, and H94. The interval 138 to 240 is disordered; the sequence is DEPDDEECKR…GENGHKHGCR (103 aa). Residues 144–156 show a composition bias toward basic and acidic residues; that stretch reads ECKRILKGHHPDN. Residues 157–232 are compositionally biased toward low complexity; sequence NENGNGDNGN…NNGENGNNGE (76 aa). A run of 24 repeats spans residues 162–164, 165–167, 168–170, 171–173, 174–176, 177–179, 180–182, 183–185, 186–188, 189–191, 192–194, 195–197, 198–200, 201–203, 204–206, 207–209, 210–212, 213–215, 216–218, 219–221, 222–224, 225–227, 228–229, and 231–233. The tract at residues 162–233 is 24 X 3 AA approximate tandem repeats of G-X-N; it reads GDNGNNGYNG…NGENGNNGEN (72 aa). 298–299 serves as a coordination point for substrate; it reads TT.

This sequence belongs to the alpha-carbonic anhydrase family. As to quaternary structure, homooligomer; disulfide-linked. May also be disulfide-linked to insoluble organic matrix. Zn(2+) is required as a cofactor. As to expression, expressed in the mantle.

The protein resides in the secreted. Its subcellular location is the extracellular space. It localises to the extracellular matrix. It catalyses the reaction hydrogencarbonate + H(+) = CO2 + H2O. Its function is as follows. Acts as a negative regulator for calcification in the shells of mollusks. May function both as a calcium concentrator and as a carbonic anhydrase required for production of carbonate ions, which are assembled to CaCO(3) at mineralization sites. Is important for shell formation in both the calcitic prismatic layer and the aragonitic nacreous layer. Shows inhibitory activity of crystal formation when present in free state but, when attached to the insoluble matrix, may regulate the form and size of aragonite crystal. The protein is Nacrein-like protein P1 of Mizuhopecten yessoensis (Japanese scallop).